Reading from the N-terminus, the 20-residue chain is Cytochrome c oxidase subunit 5A-1, mitochondrial (20 aa).

This sequence belongs to the cytochrome c oxidase subunit 5A family. Component of the cytochrome c oxidase (complex IV, CIV), a multisubunit enzyme composed of 14 subunits. The complex is composed of a catalytic core of 3 subunits MT-CO1, MT-CO2 and MT-CO3, encoded in the mitochondrial DNA, and 11 supernumerary subunits COX4I, COX5A, COX5B, COX6A, COX6B, COX6C, COX7A, COX7B, COX7C, COX8 and NDUFA4, which are encoded in the nuclear genome. The complex exists as a monomer or a dimer and forms supercomplexes (SCs) in the inner mitochondrial membrane with NADH-ubiquinone oxidoreductase (complex I, CI) and ubiquinol-cytochrome c oxidoreductase (cytochrome b-c1 complex, complex III, CIII), resulting in different assemblies (supercomplex SCI(1)III(2)IV(1) and megacomplex MCI(2)III(2)IV(2)). Interacts with AFG1L. Interacts with RAB5IF.

The protein localises to the mitochondrion inner membrane. The protein operates within energy metabolism; oxidative phosphorylation. In terms of biological role, component of the cytochrome c oxidase, the last enzyme in the mitochondrial electron transport chain which drives oxidative phosphorylation. The respiratory chain contains 3 multisubunit complexes succinate dehydrogenase (complex II, CII), ubiquinol-cytochrome c oxidoreductase (cytochrome b-c1 complex, complex III, CIII) and cytochrome c oxidase (complex IV, CIV), that cooperate to transfer electrons derived from NADH and succinate to molecular oxygen, creating an electrochemical gradient over the inner membrane that drives transmembrane transport and the ATP synthase. Cytochrome c oxidase is the component of the respiratory chain that catalyzes the reduction of oxygen to water. Electrons originating from reduced cytochrome c in the intermembrane space (IMS) are transferred via the dinuclear copper A center (CU(A)) of subunit 2 and heme A of subunit 1 to the active site in subunit 1, a binuclear center (BNC) formed by heme A3 and copper B (CU(B)). The BNC reduces molecular oxygen to 2 water molecules using 4 electrons from cytochrome c in the IMS and 4 protons from the mitochondrial matrix. The sequence is that of Cytochrome c oxidase subunit 5A-1, mitochondrial from Thunnus obesus (Bigeye tuna).